Consider the following 305-residue polypeptide: Ribonuclease BN (305 aa).

Zn(2+) is bound by residues His64, His66, Asp68, His69, His141, Asp212, and His270. The Proton acceptor role is filled by Asp68.

This sequence belongs to the RNase Z family. RNase BN subfamily. Homodimer. Zn(2+) is required as a cofactor.

Zinc phosphodiesterase, which has both exoribonuclease and endoribonuclease activities. The sequence is that of Ribonuclease BN from Enterobacter sp. (strain 638).